We begin with the raw amino-acid sequence, 248 residues long: Probable transcriptional regulatory protein PFL_4766 (248 aa).

Belongs to the TACO1 family.

The protein resides in the cytoplasm. This chain is Probable transcriptional regulatory protein PFL_4766, found in Pseudomonas fluorescens (strain ATCC BAA-477 / NRRL B-23932 / Pf-5).